The primary structure comprises 196 residues: Peptidyl-tRNA hydrolase (196 aa).

A tRNA-binding site is contributed by Y19. H24 (proton acceptor) is an active-site residue. 3 residues coordinate tRNA: Y68, N70, and N116.

This sequence belongs to the PTH family. As to quaternary structure, monomer.

Its subcellular location is the cytoplasm. The enzyme catalyses an N-acyl-L-alpha-aminoacyl-tRNA + H2O = an N-acyl-L-amino acid + a tRNA + H(+). Hydrolyzes ribosome-free peptidyl-tRNAs (with 1 or more amino acids incorporated), which drop off the ribosome during protein synthesis, or as a result of ribosome stalling. Its function is as follows. Catalyzes the release of premature peptidyl moieties from peptidyl-tRNA molecules trapped in stalled 50S ribosomal subunits, and thus maintains levels of free tRNAs and 50S ribosomes. This Aromatoleum aromaticum (strain DSM 19018 / LMG 30748 / EbN1) (Azoarcus sp. (strain EbN1)) protein is Peptidyl-tRNA hydrolase.